Here is a 200-residue protein sequence, read N- to C-terminus: ATP-dependent Clp protease proteolytic subunit (200 aa).

The Nucleophile role is filled by S104. H129 is a catalytic residue.

Belongs to the peptidase S14 family. As to quaternary structure, fourteen ClpP subunits assemble into 2 heptameric rings which stack back to back to give a disk-like structure with a central cavity, resembling the structure of eukaryotic proteasomes.

Its subcellular location is the cytoplasm. The catalysed reaction is Hydrolysis of proteins to small peptides in the presence of ATP and magnesium. alpha-casein is the usual test substrate. In the absence of ATP, only oligopeptides shorter than five residues are hydrolyzed (such as succinyl-Leu-Tyr-|-NHMec, and Leu-Tyr-Leu-|-Tyr-Trp, in which cleavage of the -Tyr-|-Leu- and -Tyr-|-Trp bonds also occurs).. Its function is as follows. Cleaves peptides in various proteins in a process that requires ATP hydrolysis. Has a chymotrypsin-like activity. Plays a major role in the degradation of misfolded proteins. In Rubrobacter xylanophilus (strain DSM 9941 / JCM 11954 / NBRC 16129 / PRD-1), this protein is ATP-dependent Clp protease proteolytic subunit.